The chain runs to 1015 residues: DNA polymerase catalytic subunit (1015 aa).

This sequence belongs to the DNA polymerase type-B family. Forms a complex with the ssDNA-binding protein BALF2, the DNA polymerase processivity factor BMRF1, and the alkaline exonuclease BGLF5. Interacts with the putative helicase-primase complex composed of BBLF4, BSLF1 and BBLF2/3 proteins; these interactions may coordinate leading and lagging strand DNA synthesis at the replication fork.

It localises to the host nucleus. It carries out the reaction DNA(n) + a 2'-deoxyribonucleoside 5'-triphosphate = DNA(n+1) + diphosphate. Functionally, replicates viral genomic DNA in the late phase of lytic infection, producing long concatemeric DNA. The replication complex is composed of six viral proteins: the DNA polymerase, processivity factor, primase, primase-associated factor, helicase, and ssDNA-binding protein. The protein is DNA polymerase catalytic subunit of Epstein-Barr virus (strain B95-8) (HHV-4).